Consider the following 444-residue polypeptide: Chromosome partition protein MukF (444 aa).

The leucine-zipper stretch occupies residues leucine 211–isoleucine 239.

It belongs to the MukF family. In terms of assembly, interacts, and probably forms a ternary complex, with MukE and MukB via its C-terminal region. The complex formation is stimulated by calcium or magnesium. It is required for an interaction between MukE and MukB.

It is found in the cytoplasm. It localises to the nucleoid. Involved in chromosome condensation, segregation and cell cycle progression. May participate in facilitating chromosome segregation by condensation DNA from both sides of a centrally located replisome during cell division. Not required for mini-F plasmid partitioning. Probably acts via its interaction with MukB and MukE. Overexpression results in anucleate cells. It has a calcium binding activity. The polypeptide is Chromosome partition protein MukF (Actinobacillus succinogenes (strain ATCC 55618 / DSM 22257 / CCUG 43843 / 130Z)).